A 230-amino-acid polypeptide reads, in one-letter code: ATP-dependent dethiobiotin synthetase BioD (230 aa).

An ATP-binding site is contributed by 12–17; the sequence is DVGKTV. Residue T16 coordinates Mg(2+). Residue K37 is part of the active site. T41 contributes to the substrate binding site. ATP-binding positions include D49, 108–111, 168–169, and 198–200; these read EGAG, GS, and PEG. Mg(2+) is bound by residues D49 and E108.

Belongs to the dethiobiotin synthetase family. In terms of assembly, homodimer. Mg(2+) serves as cofactor.

It is found in the cytoplasm. The enzyme catalyses (7R,8S)-7,8-diammoniononanoate + CO2 + ATP = (4R,5S)-dethiobiotin + ADP + phosphate + 3 H(+). It participates in cofactor biosynthesis; biotin biosynthesis; biotin from 7,8-diaminononanoate: step 1/2. In terms of biological role, catalyzes a mechanistically unusual reaction, the ATP-dependent insertion of CO2 between the N7 and N8 nitrogen atoms of 7,8-diaminopelargonic acid (DAPA, also called 7,8-diammoniononanoate) to form a ureido ring. The chain is ATP-dependent dethiobiotin synthetase BioD from Corynebacterium kroppenstedtii (strain DSM 44385 / JCM 11950 / CIP 105744 / CCUG 35717).